Here is a 435-residue protein sequence, read N- to C-terminus: MRDSHPVEQTVGIEYYVTETDGTGGRLRDRPADFRVREREAFGADCRPLDADPGSYPHLVFRATLREWDTNDFASAVSNALGVSRERVSWAGTKDKHAVTTQLFSVRHDDAALPDLDGADIEPIGRAGRPVLFGDLAGNEFELVIRDPDRPEHAEATAAELCDFGGGEAGVPNYFGTQRFGSRRPITHRVGLDVLDGDWEAAAVRYVCESSEREPERTQEVREGIDADRDWAAAGERLPGSLRFERAIANRLAEGAESPDDYRAALEELPSNLQRMFVNAAQSYVFNRILSERLRRGLPFDEPVVGDVVCFSDSDGNPDPDRTQTVTESRLETVRRHCERGRAFVTAPLVGTETVFGDGEPAEITREVLADVDVSPTDFELPGEFGSSGTRRAVLVTTDLTVEQEPLTLSFSLPKGSYATVVAREFLKADPEALS.

The active-site Nucleophile is aspartate 95. In terms of domain architecture, TRUD spans glycine 170–valine 396.

This sequence belongs to the pseudouridine synthase TruD family.

The enzyme catalyses uridine(13) in tRNA = pseudouridine(13) in tRNA. Functionally, could be responsible for synthesis of pseudouridine from uracil-13 in transfer RNAs. In Natronomonas pharaonis (strain ATCC 35678 / DSM 2160 / CIP 103997 / JCM 8858 / NBRC 14720 / NCIMB 2260 / Gabara) (Halobacterium pharaonis), this protein is Probable tRNA pseudouridine synthase D.